Consider the following 608-residue polypeptide: RAS guanyl-releasing protein 2 (608 aa).

Positions threonine 4 to threonine 126 constitute an N-terminal Ras-GEF domain. A phosphoserine mark is found at serine 116, serine 117, and serine 147. Residues glutamate 154 to arginine 387 enclose the Ras-GEF domain. The segment at leucine 382–proline 405 is disordered. EF-hand domains lie at histidine 426–leucine 461 and alanine 463–valine 490. Residues aspartate 439, aspartate 441, aspartate 443, histidine 445, glutamate 450, aspartate 468, asparagine 470, aspartate 472, cysteine 474, and glutamate 479 each contribute to the Ca(2+) site. The segment at valine 498–cysteine 548 adopts a Phorbol-ester/DAG-type zinc-finger fold. 2 positions are modified to phosphoserine: serine 554 and serine 575. Residues valine 555–valine 596 are disordered.

Belongs to the RASGRP family. Forms a signaling complex with RAP1 and BRAF. Interacts with F-actin. Interacts with RAP1. Expressed in striatal neurons (at protein level). Expressed in the hematopoietic system. Detected in olfactory structures and deep cortical layers of brain.

The protein localises to the cytoplasm. It is found in the cytosol. The protein resides in the cell membrane. Its subcellular location is the synapse. It localises to the synaptosome. The protein localises to the cell projection. It is found in the ruffle membrane. Its function is as follows. Functions as a calcium- and DAG-regulated nucleotide exchange factor specifically activating Rap through the exchange of bound GDP for GTP. May also activate other GTPases such as RRAS, RRAS2, NRAS, KRAS but not HRAS. Functions in aggregation of platelets and adhesion of T-lymphocytes and neutrophils probably through inside-out integrin activation. May function in the muscarinic acetylcholine receptor M1/CHRM1 signaling pathway. The polypeptide is RAS guanyl-releasing protein 2 (Rasgrp2) (Rattus norvegicus (Rat)).